A 420-amino-acid chain; its full sequence is Tyrosine--tRNA ligase (420 aa).

Tyr-38 serves as a coordination point for L-tyrosine. Positions 43-52 match the 'HIGH' region motif; that stretch reads PTGDSLHIGH. Positions 169 and 173 each coordinate L-tyrosine. Positions 231–235 match the 'KMSKS' region motif; sequence KFGKS. Lys-234 is a binding site for ATP. In terms of domain architecture, S4 RNA-binding spans 353–419; sequence KNLVDFLVDT…GKRKYTLVTI (67 aa).

The protein belongs to the class-I aminoacyl-tRNA synthetase family. TyrS type 1 subfamily. Homodimer.

It is found in the cytoplasm. It catalyses the reaction tRNA(Tyr) + L-tyrosine + ATP = L-tyrosyl-tRNA(Tyr) + AMP + diphosphate + H(+). Catalyzes the attachment of tyrosine to tRNA(Tyr) in a two-step reaction: tyrosine is first activated by ATP to form Tyr-AMP and then transferred to the acceptor end of tRNA(Tyr). The chain is Tyrosine--tRNA ligase from Lactobacillus helveticus (strain DPC 4571).